Here is a 339-residue protein sequence, read N- to C-terminus: Dihydroorotate dehydrogenase (quinone) (339 aa).

Residues 64–68 and T88 each bind FMN; that span reads AGADK. K68 lines the substrate pocket. 113–117 contributes to the substrate binding site; sequence NRNGF. Residues N141 and N174 each contribute to the FMN site. Residue N174 coordinates substrate. S177 acts as the Nucleophile in catalysis. N179 contacts substrate. The FMN site is built by K219 and T247. 248–249 is a substrate binding site; it reads NT. FMN contacts are provided by residues G270, G299, and 320–321; that span reads YS.

The protein belongs to the dihydroorotate dehydrogenase family. Type 2 subfamily. In terms of assembly, monomer. FMN is required as a cofactor.

The protein resides in the cell membrane. The enzyme catalyses (S)-dihydroorotate + a quinone = orotate + a quinol. It participates in pyrimidine metabolism; UMP biosynthesis via de novo pathway; orotate from (S)-dihydroorotate (quinone route): step 1/1. Catalyzes the conversion of dihydroorotate to orotate with quinone as electron acceptor. The polypeptide is Dihydroorotate dehydrogenase (quinone) (Haemophilus influenzae (strain PittGG)).